The sequence spans 200 residues: MTYVLALTGGIATGKSTADQFFKNKNIPVVDCDQIAHDLMKPKNASWQAIKDNFGTEYLNSDQTINRKKLGQLVFSDPTALNKLNQLTHPLIFDKTIQKIKMYQDKDIVILDAPVYFESNLDKKKIANGVLVITLPEATQINRLKQRNNLTDEEAKMRIKSQMPLNKKAQMADFVIANTGTIEELENKLEQLLIKIKEEG.

The DPCK domain maps to 4–200 (VLALTGGIAT…QLLIKIKEEG (197 aa)). ATP is bound at residue 12–17 (ATGKST).

This sequence belongs to the CoaE family.

The protein localises to the cytoplasm. The catalysed reaction is 3'-dephospho-CoA + ATP = ADP + CoA + H(+). It participates in cofactor biosynthesis; coenzyme A biosynthesis; CoA from (R)-pantothenate: step 5/5. In terms of biological role, catalyzes the phosphorylation of the 3'-hydroxyl group of dephosphocoenzyme A to form coenzyme A. The protein is Dephospho-CoA kinase of Lactobacillus acidophilus (strain ATCC 700396 / NCK56 / N2 / NCFM).